The following is a 448-amino-acid chain: Histidinol dehydrogenase (448 aa).

NAD(+) contacts are provided by Y136, Q197, and N220. Residues S243, Q265, and H268 each contribute to the substrate site. 2 residues coordinate Zn(2+): Q265 and H268. Residues E333 and H334 each act as proton acceptor in the active site. 4 residues coordinate substrate: H334, D367, E421, and H426. D367 contributes to the Zn(2+) binding site. H426 provides a ligand contact to Zn(2+).

It belongs to the histidinol dehydrogenase family. Requires Zn(2+) as cofactor.

The enzyme catalyses L-histidinol + 2 NAD(+) + H2O = L-histidine + 2 NADH + 3 H(+). Its pathway is amino-acid biosynthesis; L-histidine biosynthesis; L-histidine from 5-phospho-alpha-D-ribose 1-diphosphate: step 9/9. Functionally, catalyzes the sequential NAD-dependent oxidations of L-histidinol to L-histidinaldehyde and then to L-histidine. This chain is Histidinol dehydrogenase, found in Pseudomonas syringae pv. tomato (strain ATCC BAA-871 / DC3000).